The following is a 229-amino-acid chain: UPF0488 protein C8orf33 (229 aa).

Over residues 1–16 the composition is skewed to low complexity; it reads MAALGHLAGEAAAAPG. The segment at 1–96 is disordered; the sequence is MAALGHLAGE…GEKASEKLAP (96 aa). N-acetylalanine is present on Ala2. Arg27 bears the Omega-N-methylarginine mark. A compositionally biased stretch (basic residues) spans 69–79; sequence KKQKNKKKTRN. Ser82 is modified (phosphoserine).

This sequence belongs to the UPF0488 family.

This chain is UPF0488 protein C8orf33 (C8orf33), found in Homo sapiens (Human).